Consider the following 442-residue polypeptide: tRNA modification GTPase MnmE (442 aa).

(6S)-5-formyl-5,6,7,8-tetrahydrofolate contacts are provided by Arg24, Glu82, and Lys120. The region spanning 217–367 is the TrmE-type G domain; that stretch reads GLHIVITGEP…LVSVIKEKVE (151 aa). Residues 227-232, 246-252, and 271-274 contribute to the GTP site; these read NVGKST, SEYVGTT, and DTAG. Residues Ser231 and Thr252 each contribute to the Mg(2+) site. Residue Lys442 coordinates (6S)-5-formyl-5,6,7,8-tetrahydrofolate.

It belongs to the TRAFAC class TrmE-Era-EngA-EngB-Septin-like GTPase superfamily. TrmE GTPase family. As to quaternary structure, homodimer. Heterotetramer of two MnmE and two MnmG subunits. K(+) is required as a cofactor.

Its subcellular location is the cytoplasm. Exhibits a very high intrinsic GTPase hydrolysis rate. Involved in the addition of a carboxymethylaminomethyl (cmnm) group at the wobble position (U34) of certain tRNAs, forming tRNA-cmnm(5)s(2)U34. The polypeptide is tRNA modification GTPase MnmE (Wolbachia sp. subsp. Brugia malayi (strain TRS)).